The chain runs to 326 residues: Malate dehydrogenase (326 aa).

G11–G17 is a binding site for NAD(+). Substrate is bound by residues R92 and R98. Residues N105, Q112, and V129 to N131 contribute to the NAD(+) site. Residues N131 and R162 each contribute to the substrate site. The active-site Proton acceptor is H187.

It belongs to the LDH/MDH superfamily. MDH type 2 family.

It carries out the reaction (S)-malate + NAD(+) = oxaloacetate + NADH + H(+). In terms of biological role, catalyzes the reversible oxidation of malate to oxaloacetate. The polypeptide is Malate dehydrogenase (Chromobacterium violaceum (strain ATCC 12472 / DSM 30191 / JCM 1249 / CCUG 213 / NBRC 12614 / NCIMB 9131 / NCTC 9757 / MK)).